Here is an 85-residue protein sequence, read N- to C-terminus: Large ribosomal subunit protein bL27 (85 aa).

Residues 1–21 (MAHKKGVGSTRNGRDSDGQRL) are disordered.

The protein belongs to the bacterial ribosomal protein bL27 family.

This is Large ribosomal subunit protein bL27 from Geotalea uraniireducens (strain Rf4) (Geobacter uraniireducens).